The following is a 195-amino-acid chain: FMN-dependent NADH:quinone oxidoreductase (195 aa).

Residues S10, 16 to 18 (SVS), and 88 to 91 (MYNF) contribute to the FMN site.

The protein belongs to the azoreductase type 1 family. In terms of assembly, homodimer. FMN serves as cofactor.

It catalyses the reaction 2 a quinone + NADH + H(+) = 2 a 1,4-benzosemiquinone + NAD(+). It carries out the reaction N,N-dimethyl-1,4-phenylenediamine + anthranilate + 2 NAD(+) = 2-(4-dimethylaminophenyl)diazenylbenzoate + 2 NADH + 2 H(+). Its function is as follows. Quinone reductase that provides resistance to thiol-specific stress caused by electrophilic quinones. Also exhibits azoreductase activity. Catalyzes the reductive cleavage of the azo bond in aromatic azo compounds to the corresponding amines. The protein is FMN-dependent NADH:quinone oxidoreductase of Francisella philomiragia subsp. philomiragia (strain ATCC 25017 / CCUG 19701 / FSC 153 / O#319-036).